A 341-amino-acid polypeptide reads, in one-letter code: MKALSKLKAEEGIWMTDVPVPELGHNDLLIKIRKTAICGTDVHIYNWDEWSQKTIPVPMVVGHEYVGEVVGIGQEVKGFKIGDRVSGEGHITCGHCRNCRGGRTHLCRNTIGVGVNRPGCFAEYLVIPAFNAFKIPDNISDDLASIFDPFGNAVHTALSFDLVGEDVLVSGAGPIGIMAAAVAKHVGARNVVITDVNEYRLELARKMGITRAVNVAKENLNDVMAELGMAEGFDIGLEMSGAPPAFRTMLDTMNHGGRIAMLGIPPSDMSIDWTKVIFKGLFIKGIYGREMFETWYKMAALIQSGLDLSPIITHRFSIDDFQKGFDAMRSGQSGKVILSWD.

Cysteine 38 provides a ligand contact to Zn(2+). Catalysis depends on charge relay system residues threonine 40 and histidine 43. The Zn(2+) site is built by histidine 63, glutamate 64, cysteine 93, cysteine 96, cysteine 99, and cysteine 107. Residues isoleucine 175, aspartate 195, arginine 200, 262–264 (LGI), and 286–287 (IY) each bind NAD(+).

This sequence belongs to the zinc-containing alcohol dehydrogenase family. As to quaternary structure, homotetramer. It depends on Zn(2+) as a cofactor.

It is found in the cytoplasm. It catalyses the reaction L-threonine + NAD(+) = (2S)-2-amino-3-oxobutanoate + NADH + H(+). It participates in amino-acid degradation; L-threonine degradation via oxydo-reductase pathway; glycine from L-threonine: step 1/2. Catalyzes the NAD(+)-dependent oxidation of L-threonine to 2-amino-3-ketobutyrate. This chain is L-threonine 3-dehydrogenase, found in Shigella sonnei (strain Ss046).